The primary structure comprises 108 residues: MLKTTLLFFVTALCEIIGCFLTWLWIKRGASVWWLLPAAASLALFVWLLTLHPAASGRVYAAYGGVYVCTALLWLRVVDGVRLTVYDWCGAPIALCGMLIIVVGWGRT.

The Periplasmic portion of the chain corresponds to 1–5; the sequence is MLKTT. Residues 6-26 form a helical membrane-spanning segment; the sequence is LLFFVTALCEIIGCFLTWLWI. Residues 27-30 lie on the Cytoplasmic side of the membrane; that stretch reads KRGA. The chain crosses the membrane as a helical span at residues 31–51; sequence SVWWLLPAAASLALFVWLLTL. Residues 52–60 lie on the Periplasmic side of the membrane; that stretch reads HPAASGRVY. Residues 61–81 form a helical membrane-spanning segment; that stretch reads AAYGGVYVCTALLWLRVVDGV. Over 82–84 the chain is Cytoplasmic; it reads RLT. A helical transmembrane segment spans residues 85 to 105; that stretch reads VYDWCGAPIALCGMLIIVVGW. At 106–108 the chain is on the periplasmic side; it reads GRT.

The protein belongs to the UPF0060 family.

The protein localises to the cell inner membrane. This is UPF0060 membrane protein YnfA from Salmonella dublin (strain CT_02021853).